The sequence spans 576 residues: Rop guanine nucleotide exchange factor 13 (576 aa).

The region spanning 119 to 485 (KSCYFAYVTE…QLTQNPELAM (367 aa)) is the PRONE domain. Residues 557-570 (KTTYLESLGTTRSP) are compositionally biased toward polar residues. The disordered stretch occupies residues 557-576 (KTTYLESLGTTRSPTAGRYS).

Interacts with PRK6. Specifically expressed in mature flowers.

Functionally, guanine-nucleotide exchange factor (GEF) that acts as an activator of Rop (Rho of plants) GTPases by promoting the exchange of GDP for GTP. This is Rop guanine nucleotide exchange factor 13 from Arabidopsis thaliana (Mouse-ear cress).